Here is a 473-residue protein sequence, read N- to C-terminus: Photosystem II CP43 reaction center protein (473 aa).

A propeptide spanning residues 1-14 (MKTLYSLRRFYHVE) is cleaved from the precursor. An N-acetylthreonine modification is found at Thr-15. Thr-15 carries the phosphothreonine modification. 5 consecutive transmembrane segments (helical) span residues 69-93 (LFEVAHFVPEKPMYEQGLILLPHLA), 134-155 (LLGPETLEESFPFFGYVWKDRN), 178-200 (KALYFGGVYDTWAPGGGDVRKIT), 255-275 (KPFAWARRALVWSGEAYLSYS), and 291-312 (WFNNTAYPSEFYGPTGPEASQA). Glu-367 provides a ligand contact to [CaMn4O5] cluster. Residues 447–471 (RARAAAAGFEKGIDRDFEPVLSMTP) traverse the membrane as a helical segment.

This sequence belongs to the PsbB/PsbC family. PsbC subfamily. In terms of assembly, PSII is composed of 1 copy each of membrane proteins PsbA, PsbB, PsbC, PsbD, PsbE, PsbF, PsbH, PsbI, PsbJ, PsbK, PsbL, PsbM, PsbT, PsbX, PsbY, PsbZ, Psb30/Ycf12, at least 3 peripheral proteins of the oxygen-evolving complex and a large number of cofactors. It forms dimeric complexes. It depends on Binds multiple chlorophylls and provides some of the ligands for the Ca-4Mn-5O cluster of the oxygen-evolving complex. It may also provide a ligand for a Cl- that is required for oxygen evolution. PSII binds additional chlorophylls, carotenoids and specific lipids. as a cofactor.

It is found in the plastid. Its subcellular location is the chloroplast thylakoid membrane. In terms of biological role, one of the components of the core complex of photosystem II (PSII). It binds chlorophyll and helps catalyze the primary light-induced photochemical processes of PSII. PSII is a light-driven water:plastoquinone oxidoreductase, using light energy to abstract electrons from H(2)O, generating O(2) and a proton gradient subsequently used for ATP formation. The chain is Photosystem II CP43 reaction center protein from Aethionema cordifolium (Lebanon stonecress).